A 393-amino-acid polypeptide reads, in one-letter code: Staphopain B (393 aa).

The signal sequence occupies residues 1-36; it reads MNSSYKSRVFNIISIIMVSMLILSLGAFANNNKAKA. A propeptide spanning residues 37-219 is cleaved from the precursor; sequence DSHSKQLEIN…KVEENEAIQE (183 aa). Catalysis depends on residues Cys243, His340, and Asn360.

This sequence belongs to the peptidase C47 family. As to quaternary structure, in the cytoplasm, prematurely activated/folded SspB forms a stable non-covalent complex with SspC. In terms of processing, proteolytically cleaved by staphylococcal serine protease (SspA).

Its subcellular location is the secreted. Its activity is regulated as follows. Prematurely activated/folded staphopain B is inhibited by staphostatin B (SspC), which is probably required to protect staphylococcal cytoplasmic proteins from degradation by SspB. Its function is as follows. Cysteine protease that plays an important role in the inhibition of host innate immune response. Degrades host elastin, fibrogen, fibronectin and kininogen. Blocks phagocytosis of opsonised S.aureus by neutrophils and monocytes by inducing their death in a proteolytic activity-dependent manner. Decreases surface expression of the 'don't eat me' signal CD31 on neutrophils. Cleaves host galectin-3/LGALS3, thereby inhibiting the neutrophil-activating ability of the lectin. In Staphylococcus aureus (strain Mu50 / ATCC 700699), this protein is Staphopain B (sspB).